The primary structure comprises 368 residues: DNA replication and repair protein RecF (368 aa).

30–37 (GNNAQGKT) serves as a coordination point for ATP.

This sequence belongs to the RecF family.

Its subcellular location is the cytoplasm. Functionally, the RecF protein is involved in DNA metabolism; it is required for DNA replication and normal SOS inducibility. RecF binds preferentially to single-stranded, linear DNA. It also seems to bind ATP. In Streptococcus pyogenes serotype M49 (strain NZ131), this protein is DNA replication and repair protein RecF.